A 165-amino-acid chain; its full sequence is Ribosome maturation factor RimM (165 aa).

Positions 94–163 constitute a PRC barrel domain; it reads EDEFYIADLN…KDYVTLNYQR (70 aa).

The protein belongs to the RimM family. In terms of assembly, binds ribosomal protein uS19.

The protein resides in the cytoplasm. An accessory protein needed during the final step in the assembly of 30S ribosomal subunit, possibly for assembly of the head region. Essential for efficient processing of 16S rRNA. May be needed both before and after RbfA during the maturation of 16S rRNA. It has affinity for free ribosomal 30S subunits but not for 70S ribosomes. The sequence is that of Ribosome maturation factor RimM from Rickettsia akari (strain Hartford).